Reading from the N-terminus, the 253-residue chain is 5'/3'-nucleotidase SurE (253 aa).

Residues D8, D9, S39, and N92 each coordinate a divalent metal cation.

The protein belongs to the SurE nucleotidase family. A divalent metal cation is required as a cofactor.

Its subcellular location is the cytoplasm. The catalysed reaction is a ribonucleoside 5'-phosphate + H2O = a ribonucleoside + phosphate. It carries out the reaction a ribonucleoside 3'-phosphate + H2O = a ribonucleoside + phosphate. The enzyme catalyses [phosphate](n) + H2O = [phosphate](n-1) + phosphate + H(+). Functionally, nucleotidase with a broad substrate specificity as it can dephosphorylate various ribo- and deoxyribonucleoside 5'-monophosphates and ribonucleoside 3'-monophosphates with highest affinity to 3'-AMP. Also hydrolyzes polyphosphate (exopolyphosphatase activity) with the preference for short-chain-length substrates (P20-25). Might be involved in the regulation of dNTP and NTP pools, and in the turnover of 3'-mononucleotides produced by numerous intracellular RNases (T1, T2, and F) during the degradation of various RNAs. The chain is 5'/3'-nucleotidase SurE from Citrobacter koseri (strain ATCC BAA-895 / CDC 4225-83 / SGSC4696).